The sequence spans 1215 residues: Zinc finger E-box-binding homeobox 2 (1215 aa).

The segment at 1–111 (MKQPIMADGP…ILQASVAGPE (111 aa)) is disordered. The segment covering 12 to 24 (CKRRKQANPRRKN) has biased composition (basic residues). The segment covering 57-74 (DQDTSPASMPNHESSPHM) has biased composition (polar residues). Residues 89–98 (RESVVEHSWH) are compositionally biased toward basic and acidic residues. Ser-142 carries the post-translational modification Phosphoserine. 3 consecutive C2H2-type zinc fingers follow at residues 211–234 (LTCP…KYRH), 241–263 (FSCP…MVTH), and 282–304 (FKCT…LRIH). The C2H2-type 4; atypical zinc-finger motif lies at 310-334 (YECPNCKKRFSHSGSYSSHISSKKC). 3 positions are modified to phosphoserine: Ser-356, Ser-360, and Ser-364. An N6-acetyllysine modification is found at Lys-377. Lys-391 is covalently cross-linked (Glycyl lysine isopeptide (Lys-Gly) (interchain with G-Cter in SUMO); alternate). Lys-391 is covalently cross-linked (Glycyl lysine isopeptide (Lys-Gly) (interchain with G-Cter in SUMO2); alternate). An SMAD-MH2 binding domain region spans residues 437–487 (QHLGVGMEAPLLGFPTMNSNLSEVQKVLQIVDNTVSRQKMDCKTEDISKLK). Glycyl lysine isopeptide (Lys-Gly) (interchain with G-Cter in SUMO2) cross-links involve residues Lys-479 and Lys-555. The C2H2-type 5; degenerate zinc-finger motif lies at 581-605 (FSCQFCKESFPGPIPLHQHERYLCK). Residues Lys-611 and Lys-632 each participate in a glycyl lysine isopeptide (Lys-Gly) (interchain with G-Cter in SUMO2) cross-link. The segment at residues 644 to 703 (GLTSPINPYKDHMSVLKAYYAMNMEPNSDELLKISIAVGLPQEFVKEWFEQRKVYQYSNS) is a DNA-binding region (homeobox; atypical). The residue at position 647 (Ser-647) is a Phosphoserine. 2 disordered regions span residues 702-740 (NSRS…DSIT) and 772-811 (VDKL…SEEL). Residue Lys-713 forms a Glycyl lysine isopeptide (Lys-Gly) (interchain with G-Cter in SUMO2) linkage. Ser-731 and Ser-780 each carry phosphoserine. Residues 780 to 808 (SNTPSPLNLSSTSSKNSHSSSYTPNSFSS) are compositionally biased toward low complexity. Position 782 is a phosphothreonine (Thr-782). At Ser-784 the chain carries Phosphoserine. Lys-866 is covalently cross-linked (Glycyl lysine isopeptide (Lys-Gly) (interchain with G-Cter in SUMO); alternate). A Glycyl lysine isopeptide (Lys-Gly) (interchain with G-Cter in SUMO2); alternate cross-link involves residue Lys-866. C2H2-type zinc fingers lie at residues 999–1021 (YACD…KYEH) and 1027–1049 (HQCQ…SRLH). The C2H2-type 8; atypical zinc finger occupies 1055–1076 (YQCDKCGKRFSHSGSYSQHMNH). Positions 1117–1215 (TPQGYSDSEE…EEDNMEDGME (99 aa)) are disordered. Residues Ser-1122 and Ser-1124 each carry the phosphoserine modification. Positions 1127–1149 (RESMPRDGESEKEHEKEGEEGYG) are enriched in basic and acidic residues. Over residues 1157–1167 (DEEEEEEEEES) the composition is skewed to acidic residues. Basic and acidic residues-rich tracts occupy residues 1168–1179 (ENKSMDTDPETI) and 1186–1205 (GDHS…KSDH). Ser-1203 carries the phosphoserine modification. Over residues 1206–1215 (EEDNMEDGME) the composition is skewed to acidic residues.

It belongs to the delta-EF1/ZFH-1 C2H2-type zinc-finger family. In terms of assembly, interacts with CBX4 and CTBP1. Binds activated SMAD1, activated SMAD2 and activated SMAD3; binding with SMAD4 is not detected. In terms of processing, sumoylation on Lys-391 and Lys-866 is promoted by the E3 SUMO-protein ligase CBX4, and impairs interaction with CTBP1 and transcription repression activity.

The protein resides in the nucleus. It is found in the chromosome. Functionally, transcriptional inhibitor that binds to DNA sequence 5'-CACCT-3' in different promoters. Represses transcription of E-cadherin. Represses expression of MEOX2. The sequence is that of Zinc finger E-box-binding homeobox 2 (Zeb2) from Mus musculus (Mouse).